Reading from the N-terminus, the 156-residue chain is Small ribosomal subunit protein uS7 (156 aa).

The protein belongs to the universal ribosomal protein uS7 family. Part of the 30S ribosomal subunit. Contacts proteins S9 and S11.

Functionally, one of the primary rRNA binding proteins, it binds directly to 16S rRNA where it nucleates assembly of the head domain of the 30S subunit. Is located at the subunit interface close to the decoding center, probably blocks exit of the E-site tRNA. The chain is Small ribosomal subunit protein uS7 from Aeromonas salmonicida (strain A449).